Here is a 394-residue protein sequence, read N- to C-terminus: MTSILTNIAAMAALQTLRTIGSNMEETQAHVSSGLRVGQAADNAAYWSIATTMRSDNMALSAVQDALGLGAAKVDTAYSGMESAIEVVKEIKAKLVAATEDGVDKAKIQEEIDQLKDQLTSIAEAASFSGENWLQADLSGGPVTKSVVGSFVRDAGGAVSVKKVDYSLNTNSVLFDTAGNTGILDKVYNVSQASVTLPVNVNGTTSEYTVGAYNVDDLIDASATFDGDYANVGAGALAGDYVKVQGSWVKAVDVAATGQEVVYDDGTTKWGVDTTVTGAPATNVAAPASIATIDITIAAQAGNLDALIAGVDEALTDMTSAAADLGSIAMRIDLQSDFVNKLSDSIDSGVGRLVDADMNEESTRLKALQTQQQLAIQSLSIANSASENVLTLFR.

The protein belongs to the bacterial flagellin family.

It is found in the secreted. Its subcellular location is the bacterial flagellum. Functionally, flagellin is the subunit protein which polymerizes to form the filaments of bacterial flagella. This Rhizobium meliloti (strain 1021) (Ensifer meliloti) protein is Flagellin B (flaB).